The following is a 254-amino-acid chain: MLLNRFLVPLRSLQKLTQARRWHQTSLINDLVVNMDKKAMWDRFYTENGSKGQFKNFEWFFGFPSVKDLVLPALQAMSCSHSGPLHILDMGCGTSALGPCIYSTSPCAVRVTCADISPVAVKLMEEHTKSTSTQPCNPSSALVFLELDCTQMTGHFKSRSLDLILDKGTTDALVRSKEGQVKAGQILRQSLQVLRPSGSFLQFSDEDPDARLIWLEREVQGAEVTADVGVQEIGELRGVSYFCYQISPRSRPHS.

The N-terminal 45 residues, 1–45 (MLLNRFLVPLRSLQKLTQARRWHQTSLINDLVVNMDKKAMWDRFY), are a transit peptide targeting the mitochondrion.

Belongs to the methyltransferase superfamily.

The protein localises to the mitochondrion. The enzyme catalyses L-lysyl-[citrate synthase] + S-adenosyl-L-methionine = N(6)-methyl-L-lysyl-[citrate synthase] + S-adenosyl-L-homocysteine + H(+). It catalyses the reaction N(6)-methyl-L-lysyl-[citrate synthase] + S-adenosyl-L-methionine = N(6),N(6)-dimethyl-L-lysyl-[citrate synthase] + S-adenosyl-L-homocysteine + H(+). It carries out the reaction N(6),N(6)-dimethyl-L-lysyl-[citrate synthase] + S-adenosyl-L-methionine = N(6),N(6),N(6)-trimethyl-L-lysyl-[citrate synthase] + S-adenosyl-L-homocysteine + H(+). Citrate synthase-lysine methyltransferase activity is inhibited by S-adenosylhomocysteine (AdoHcy) and oxaloacetate (OAA). Functionally, protein-lysine methyltransferase that selectively trimethylates citrate synthase (CS) in mitochondria. Seems to conduct trimethylation in a highly distributive manner rather than in a processive manner, and thus introduces a single methyl group per binding event. This chain is Citrate synthase-lysine N-methyltransferase CSKMT, mitochondrial, found in Danio rerio (Zebrafish).